The chain runs to 301 residues: Oxygen-dependent coproporphyrinogen-III oxidase (301 aa).

S92 serves as a coordination point for substrate. Residues H96 and H106 each contribute to the a divalent metal cation site. H106 serves as the catalytic Proton donor. 108-110 (NVR) is a substrate binding site. H145 and H175 together coordinate a divalent metal cation. Residues 240–275 (YVEFNLVWDRGTLFGLQTGGRTESILMSMPPLVRWE) form an important for dimerization region. Residue 258–260 (GGR) participates in substrate binding.

Belongs to the aerobic coproporphyrinogen-III oxidase family. Homodimer. It depends on a divalent metal cation as a cofactor.

It is found in the cytoplasm. The catalysed reaction is coproporphyrinogen III + O2 + 2 H(+) = protoporphyrinogen IX + 2 CO2 + 2 H2O. The protein operates within porphyrin-containing compound metabolism; protoporphyrin-IX biosynthesis; protoporphyrinogen-IX from coproporphyrinogen-III (O2 route): step 1/1. In terms of biological role, involved in the heme biosynthesis. Catalyzes the aerobic oxidative decarboxylation of propionate groups of rings A and B of coproporphyrinogen-III to yield the vinyl groups in protoporphyrinogen-IX. The sequence is that of Oxygen-dependent coproporphyrinogen-III oxidase from Cronobacter sakazakii (strain ATCC BAA-894) (Enterobacter sakazakii).